The chain runs to 366 residues: Major outer membrane protein (366 aa).

The N-terminal stretch at 1 to 21 (MKKTLLATAIAGAMAASGAQA) is a signal peptide.

Belongs to the Gram-negative porin family. As to quaternary structure, homotrimer.

Its subcellular location is the cell outer membrane. This chain is Major outer membrane protein, found in Halomonas elongata (strain ATCC 33173 / DSM 2581 / NBRC 15536 / NCIMB 2198 / 1H9).